We begin with the raw amino-acid sequence, 528 residues long: Dihydromonacolin L monooxygenase LovA (528 aa).

The Cytoplasmic portion of the chain corresponds to 1-23 (MTVDALTQPHHLLSLAWNDTQQH). A helical; Signal-anchor for type II membrane protein membrane pass occupies residues 24-44 (GSWFAPLVTTSAGLLCLLLYL). The Lumenal portion of the chain corresponds to 45 to 528 (CSSGRRSDLP…DEDIRLPGSL (484 aa)). Cys465 is a binding site for heme.

This sequence belongs to the cytochrome P450 family. Heme is required as a cofactor.

Its subcellular location is the membrane. The protein resides in the endoplasmic reticulum membrane. It catalyses the reaction dihydromonacolin L carboxylate + reduced [NADPH--hemoprotein reductase] + O2 = monacolin L carboxylate + oxidized [NADPH--hemoprotein reductase] + 2 H2O + H(+). The catalysed reaction is monacolin L carboxylate + reduced [NADPH--hemoprotein reductase] + O2 = monacolin J carboxylate + oxidized [NADPH--hemoprotein reductase] + H2O + H(+). The protein operates within polyketide biosynthesis; lovastatin biosynthesis. In terms of biological role, dihydromonacolin L monooxygenase; part of the gene cluster that mediates the biosynthesis of lovastatin (also known as mevinolin, mevacor or monacolin K), a hypolipidemic inhibitor of (3S)-hydroxymethylglutaryl-coenzyme A (HMG-CoA) reductase (HMGR). The first step in the biosynthesis of lovastatin is the production of dihydromonacolin L acid by the lovastatin nonaketide synthase lovB and the trans-acting enoyl reductase lovC via condensation of one acetyl-CoA unit and 8 malonyl-CoA units. Dihydromonacolin L acid is released from lovB by the thioesterase lovG. Next, dihydromonacolin L acid is oxidized by the dihydromonacolin L monooxygenase lovA twice to form monacolin J acid. The 2-methylbutyrate moiety of lovastatin is synthesized by the lovastatin diketide synthase lovF via condensation of one acetyl-CoA unit and one malonyl-CoA unit. Finally, the covalent attachment of this moiety to monacolin J acid is catalyzed by the transesterase lovD to yield lovastatin. LovD has broad substrate specificity and can also convert monacolin J to simvastatin using alpha-dimethylbutanoyl-S-methyl-3-mercaptopropionate (DMB-S-MMP) as the thioester acyl donor, and can also catalyze the reverse reaction and function as hydrolase in vitro. LovD has much higher activity with LovF-bound 2-methylbutanoate than with free diketide substrates. The sequence is that of Dihydromonacolin L monooxygenase LovA from Aspergillus terreus.